The sequence spans 188 residues: Calcium load-activated calcium channel (188 aa).

Over 1–4 (MSTM) the chain is Lumenal. A helical transmembrane segment spans residues 5 to 32 (FADTILIVFISICTALLAEGITWVLVYR). Residues 32–89 (RTDKYKRLKAEVEKQSKKLEKKKETITESAGRQQKKKIERQEEKLKNNNRDLSMVRMK) are a coiled coil. Residues 33-86 (TDKYKRLKAEVEKQSKKLEKKKETITESAGRQQKKKIERQEEKLKNNNRDLSMV) lie on the Cytoplasmic side of the membrane. Residues 87–106 (RMKSMFAIGFCFTALMGMFN) form a helical membrane-spanning segment. Residues 107 to 120 (SIFDGRVVAKLPFV) lie on the Lumenal side of the membrane. Residues 121 to 130 (PLSYIQGLSH) lie within the membrane without spanning it. Topologically, residues 131-140 (RNLLGEDYTD) are lumenal. Residues 141–162 (CSFIFLYILCTMSIRQNIQKML) traverse the membrane as a helical segment. Residues 163 to 188 (GLAPSRAATKQAGGFLGPPPQAAKFS) are Cytoplasmic-facing.

Belongs to the TMCO1 family. As to quaternary structure, homodimer and homotetramer. Component of the multi-pass translocon (MPT) complex.

Its subcellular location is the endoplasmic reticulum membrane. The protein resides in the golgi apparatus membrane. Functionally, calcium-selective channel required to prevent calcium stores from overfilling, thereby playing a key role in calcium homeostasis. In response to endoplasmic reticulum (ER) overloading, assembles into a homotetramer, forming a functional calcium-selective channel, regulating the calcium content in endoplasmic reticulum store. Component of the multi-pass translocon (MPT) complex that mediates insertion of multi-pass membrane proteins into the lipid bilayer of membranes. The protein is Calcium load-activated calcium channel of Danio rerio (Zebrafish).